Reading from the N-terminus, the 136-residue chain is Small ribosomal subunit protein uS11c (136 aa).

It belongs to the universal ribosomal protein uS11 family. In terms of assembly, part of the 30S ribosomal subunit.

The protein resides in the plastid. This Epifagus virginiana (Beechdrops) protein is Small ribosomal subunit protein uS11c.